Here is an 874-residue protein sequence, read N- to C-terminus: Alanine--tRNA ligase (874 aa).

The Zn(2+) site is built by His-562, His-566, Cys-663, and His-667.

It belongs to the class-II aminoacyl-tRNA synthetase family. Zn(2+) is required as a cofactor.

The protein localises to the cytoplasm. It catalyses the reaction tRNA(Ala) + L-alanine + ATP = L-alanyl-tRNA(Ala) + AMP + diphosphate. Catalyzes the attachment of alanine to tRNA(Ala) in a two-step reaction: alanine is first activated by ATP to form Ala-AMP and then transferred to the acceptor end of tRNA(Ala). Also edits incorrectly charged Ser-tRNA(Ala) and Gly-tRNA(Ala) via its editing domain. This is Alanine--tRNA ligase from Bordetella bronchiseptica (strain ATCC BAA-588 / NCTC 13252 / RB50) (Alcaligenes bronchisepticus).